A 104-amino-acid polypeptide reads, in one-letter code: Large ribosomal subunit protein bL21 (104 aa).

The protein belongs to the bacterial ribosomal protein bL21 family. As to quaternary structure, part of the 50S ribosomal subunit. Contacts protein L20.

In terms of biological role, this protein binds to 23S rRNA in the presence of protein L20. This is Large ribosomal subunit protein bL21 from Streptococcus agalactiae serotype Ia (strain ATCC 27591 / A909 / CDC SS700).